Reading from the N-terminus, the 95-residue chain is uncharacterized protein (95 aa).

A coiled-coil region spans residues 14 to 50 (KMEQKLQEQLDGLLEKYTELLLGETNDELKEEVKQWI).

This is an uncharacterized protein from Bacillus subtilis (strain 168).